The following is a 248-amino-acid chain: Small ribosomal subunit protein uS2 (248 aa).

It belongs to the universal ribosomal protein uS2 family.

The protein is Small ribosomal subunit protein uS2 of Cupriavidus necator (strain ATCC 17699 / DSM 428 / KCTC 22496 / NCIMB 10442 / H16 / Stanier 337) (Ralstonia eutropha).